The sequence spans 411 residues: SH3 and cysteine-rich domain-containing protein 2 (411 aa).

The interval 1–29 is disordered; that stretch reads MTEMSEKENEPDDAATHSPPGTVSALQET. The span at 19-29 shows a compositional bias: polar residues; that stretch reads PPGTVSALQET. Ser48 carries the phosphoserine modification. A disordered region spans residues 64 to 95; the sequence is TEVLLTPPTPLPPPSPPPTASDRGLATPSPSP. Over residues 70-82 the composition is skewed to pro residues; the sequence is PPTPLPPPSPPPT. A Phorbol-ester/DAG-type zinc finger spans residues 110–161; the sequence is LHSFQEHVFKRASPCELCHQLIVGNSKQGLRCKMCKVSVHLWCSEEISHQQC. 2 disordered regions span residues 174–203 and 219–288; these read SSPLLVHEPPPVCATSKESPPTGDSGKVDP and RSSF…ATLR. A compositionally biased stretch (low complexity) spans 219–232; the sequence is RSSFSSTSESPTRS. 2 consecutive SH3 domains span residues 292–351 and 354–411; these read GPMY…RVRP and NVWR…LTEI.

Interacts (via SH3 domains) with CACNA1S. Interacts (via SH3 domains) with CACNA1C. Has much lower affinity for CACNA1C than for CACNA1S.

It localises to the cytoplasm. The protein localises to the cytosol. The protein resides in the cell membrane. It is found in the sarcolemma. Functionally, plays a redundant role in promoting the expression of calcium channel CACNA1S at the cell membrane, and thereby contributes to increased channel activity. Slows down the inactivation rate of the calcium channel CACNA1C. The chain is SH3 and cysteine-rich domain-containing protein 2 (STAC2) from Homo sapiens (Human).